Here is a 388-residue protein sequence, read N- to C-terminus: Zinc finger C2H2 protein ECU10_0150 (388 aa).

The segment at tyrosine 299–histidine 322 adopts a C2H2-type zinc-finger fold.

This chain is Zinc finger C2H2 protein ECU10_0150, found in Encephalitozoon cuniculi (strain GB-M1) (Microsporidian parasite).